A 65-amino-acid chain; its full sequence is UPF0434 protein BRADO0313 (65 aa).

It belongs to the UPF0434 family.

This Bradyrhizobium sp. (strain ORS 278) protein is UPF0434 protein BRADO0313.